Reading from the N-terminus, the 410-residue chain is Serine hydroxymethyltransferase (410 aa).

(6S)-5,6,7,8-tetrahydrofolate is bound by residues Leu-119 and 123-125; that span reads GHL. An N6-(pyridoxal phosphate)lysine modification is found at Lys-228. 351–353 lines the (6S)-5,6,7,8-tetrahydrofolate pocket; it reads SPF.

The protein belongs to the SHMT family. As to quaternary structure, homodimer. Pyridoxal 5'-phosphate serves as cofactor.

The protein localises to the cytoplasm. The enzyme catalyses (6R)-5,10-methylene-5,6,7,8-tetrahydrofolate + glycine + H2O = (6S)-5,6,7,8-tetrahydrofolate + L-serine. The protein operates within one-carbon metabolism; tetrahydrofolate interconversion. It functions in the pathway amino-acid biosynthesis; glycine biosynthesis; glycine from L-serine: step 1/1. Its function is as follows. Catalyzes the reversible interconversion of serine and glycine with tetrahydrofolate (THF) serving as the one-carbon carrier. This reaction serves as the major source of one-carbon groups required for the biosynthesis of purines, thymidylate, methionine, and other important biomolecules. Also exhibits THF-independent aldolase activity toward beta-hydroxyamino acids, producing glycine and aldehydes, via a retro-aldol mechanism. The polypeptide is Serine hydroxymethyltransferase (Clostridium perfringens (strain ATCC 13124 / DSM 756 / JCM 1290 / NCIMB 6125 / NCTC 8237 / Type A)).